Reading from the N-terminus, the 205-residue chain is Small ribosomal subunit protein uS4 (205 aa).

The 64-residue stretch at 94–157 (SRLDAVVYRA…RNLALVLEAL (64 aa)) folds into the S4 RNA-binding domain.

The protein belongs to the universal ribosomal protein uS4 family. Part of the 30S ribosomal subunit. Contacts protein S5. The interaction surface between S4 and S5 is involved in control of translational fidelity.

One of the primary rRNA binding proteins, it binds directly to 16S rRNA where it nucleates assembly of the body of the 30S subunit. Functionally, with S5 and S12 plays an important role in translational accuracy. This is Small ribosomal subunit protein uS4 from Hyphomonas neptunium (strain ATCC 15444).